Reading from the N-terminus, the 161-residue chain is Nucleotide-binding protein Rmet_2899 (161 aa).

The protein belongs to the YajQ family.

Nucleotide-binding protein. The protein is Nucleotide-binding protein Rmet_2899 of Cupriavidus metallidurans (strain ATCC 43123 / DSM 2839 / NBRC 102507 / CH34) (Ralstonia metallidurans).